The sequence spans 222 residues: N-(5'-phosphoribosyl)anthranilate isomerase (222 aa).

The protein belongs to the TrpF family.

It carries out the reaction N-(5-phospho-beta-D-ribosyl)anthranilate = 1-(2-carboxyphenylamino)-1-deoxy-D-ribulose 5-phosphate. The protein operates within amino-acid biosynthesis; L-tryptophan biosynthesis; L-tryptophan from chorismate: step 3/5. The sequence is that of N-(5'-phosphoribosyl)anthranilate isomerase from Rhizobium etli (strain ATCC 51251 / DSM 11541 / JCM 21823 / NBRC 15573 / CFN 42).